The chain runs to 180 residues: Signal peptidase complex subunit 2 (180 aa).

Residues 1–45 are Cytoplasmic-facing; sequence MSDERITVVNKWDGPTVKNGLDEVVKKILNDKVGWTEQHNLMNLR. A helical membrane pass occupies residues 46 to 66; that stretch reads LLISFIGVAFSAFACGYDFYA. Residues 67-72 are Lumenal-facing; sequence PFPKSK. A helical transmembrane segment spans residues 73-93; that stretch reads IVLLVCSVSYFICMGVLQLFQ. Topologically, residues 94–180 are cytoplasmic; the sequence is WYVEKDCFYE…LWARLIRSEQ (87 aa).

It belongs to the SPCS2 family. As to quaternary structure, component of the signal peptidase complex (SPC) composed of a catalytic subunit sec-11 and three accessory subunits spcs-1, spcs-2 and spcs-3. The complex induces a local thinning of the ER membrane which is used to measure the length of the signal peptide (SP) h-region of protein substrates. This ensures the selectivity of the complex towards h-regions shorter than 18-20 amino acids.

The protein localises to the endoplasmic reticulum membrane. Functionally, component of the signal peptidase complex (SPC) which catalyzes the cleavage of N-terminal signal sequences from nascent proteins as they are translocated into the lumen of the endoplasmic reticulum. Enhances the enzymatic activity of SPC and facilitates the interactions between different components of the translocation site. The chain is Signal peptidase complex subunit 2 from Caenorhabditis briggsae.